A 507-amino-acid polypeptide reads, in one-letter code: Congo red hypersensitive protein 1 (507 aa).

The signal sequence occupies residues 1–22 (MKVLDLLTVLSASSLLSTFAAA). The region spanning 34–260 (ASSTASCNPL…KVIVTDYSTG (227 aa)) is the GH16 domain. Cys-40 and Cys-48 are joined by a disulfide. Asn-117 carries an N-linked (GlcNAc...) asparagine glycan. Glu-134 acts as the Nucleophile in catalysis. The active-site Proton donor is Glu-138. Glu-138 provides a ligand contact to chitin. 2 N-linked (GlcNAc...) asparagine glycosylation sites follow: Asn-177 and Asn-201. The chitin site is built by Trp-219 and Thr-230. 2 disordered regions span residues 329-368 (SSSA…SSKT) and 381-478 (SSFE…TNSV). Composition is skewed to low complexity over residues 381–439 (SSFE…PVQD) and 451–477 (TSST…STNS). Residue Asn-482 is the site of GPI-anchor amidated asparagine attachment. Positions 483 to 507 (GADLAQSLPREGKLFSVLVALLALL) are cleaved as a propeptide — removed in mature form.

This sequence belongs to the glycosyl hydrolase 16 family. CRH1 subfamily. Post-translationally, the GPI-anchor is attached to the protein in the endoplasmic reticulum and serves to target the protein to the cell surface. There, the glucosamine-inositol phospholipid moiety is cleaved off and the GPI-modified mannoprotein is covalently attached via its lipidless GPI glycan remnant to the 1,6-beta-glucan of the outer cell wall layer.

The protein resides in the secreted. The protein localises to the cell wall. It is found in the membrane. It carries out the reaction Random endo-hydrolysis of N-acetyl-beta-D-glucosaminide (1-&gt;4)-beta-linkages in chitin and chitodextrins.. Dual chitinase/transglycosylase that plays a role in cell wall architecture. Chitinase and transglycosylase activities are coupled. Required for the polysaccharide cross-linking at the septa and the cell wall. More specifically, transfers chitin to both beta(1-3)- and beta(1-6)glucan in the cell wall. The minimal number of intact hexopyranose units required in the molecule of the acceptor oligosaccharide is two and the effectivity of the acceptor increased with the increasing length of its oligosaccharide chain. This is Congo red hypersensitive protein 1 from Saccharomyces cerevisiae (strain ATCC 204508 / S288c) (Baker's yeast).